Consider the following 482-residue polypeptide: ATP synthase subunit beta (482 aa).

Residue 161–168 coordinates ATP; sequence GGAGVGKT.

Belongs to the ATPase alpha/beta chains family. F-type ATPases have 2 components, CF(1) - the catalytic core - and CF(0) - the membrane proton channel. CF(1) has five subunits: alpha(3), beta(3), gamma(1), delta(1), epsilon(1). CF(0) has four main subunits: a(1), b(1), b'(1) and c(9-12).

It is found in the cellular thylakoid membrane. The catalysed reaction is ATP + H2O + 4 H(+)(in) = ADP + phosphate + 5 H(+)(out). Its function is as follows. Produces ATP from ADP in the presence of a proton gradient across the membrane. The catalytic sites are hosted primarily by the beta subunits. This chain is ATP synthase subunit beta, found in Microcystis aeruginosa (strain NIES-843 / IAM M-2473).